We begin with the raw amino-acid sequence, 323 residues long: Aldo-keto reductase family 1 member C4 (323 aa).

NADP(+)-binding positions include 20–24 (GFGSY) and aspartate 50. The active-site Proton donor is the tyrosine 55. Residue histidine 117 coordinates substrate. NADP(+) is bound by residues 166-167 (SN), glutamine 190, 216-221 (HSALGT), and 270-280 (KSYNEQRIREN).

This sequence belongs to the aldo/keto reductase family. In terms of assembly, monomer. High expression in liver. Also expressed in kidney.

Its subcellular location is the cytoplasm. The protein localises to the cytosol. The enzyme catalyses chlordecone alcohol + NADP(+) = chlordecone + NADPH + H(+). It catalyses the reaction a 3alpha-hydroxysteroid + NADP(+) = a 3-oxosteroid + NADPH + H(+). The catalysed reaction is a 3alpha-hydroxysteroid + NAD(+) = a 3-oxosteroid + NADH + H(+). It carries out the reaction 5alpha-androstane-3alpha,17beta-diol + NADP(+) = 17beta-hydroxy-5alpha-androstan-3-one + NADPH + H(+). The enzyme catalyses 5alpha-androstane-3beta,17beta-diol + NADP(+) = 17beta-hydroxy-5alpha-androstan-3-one + NADPH + H(+). It catalyses the reaction 5alpha-androstane-3alpha,17beta-diol + NAD(+) = 17beta-hydroxy-5alpha-androstan-3-one + NADH + H(+). The catalysed reaction is 17beta-estradiol + NADP(+) = estrone + NADPH + H(+). It carries out the reaction 17beta-estradiol + NAD(+) = estrone + NADH + H(+). The enzyme catalyses (20S)-hydroxypregn-4-en-3-one + NADP(+) = progesterone + NADPH + H(+). It catalyses the reaction (20S)-hydroxypregn-4-en-3-one + NAD(+) = progesterone + NADH + H(+). The catalysed reaction is androsterone + NADP(+) = 5alpha-androstan-3,17-dione + NADPH + H(+). It carries out the reaction testosterone + NADP(+) = androst-4-ene-3,17-dione + NADPH + H(+). The enzyme catalyses testosterone + NAD(+) = androst-4-ene-3,17-dione + NADH + H(+). It catalyses the reaction 3alpha-hydroxy-5alpha-androstane 17-O-(beta-D-glucuronate) + NADP(+) = 5alpha-dihydrotestosterone 17-O-(beta-D-glucuronate) + NADPH + H(+). The catalysed reaction is (3beta,5alpha,17beta)-3-hydroxy-androstan-17-yl sulfate + NADP(+) = 5alpha-dihydrotestosterone sulfate + NADPH + H(+). It carries out the reaction 5alpha-androstane-3alpha,17beta-diol + NAD(+) = androsterone + NADH + H(+). The protein operates within steroid metabolism. Potently inhibited by benzbromarone, 3',3'',5',5''-tetrabromophenolphthalein (TBPP) and o-cresolphthalein. Cytosolic aldo-keto reductase that catalyzes the NADH and NADPH-dependent reduction of ketosteroids to hydroxysteroids. Liver specific enzyme that acts as an NAD(P)(H)-dependent 3-, 17- and 20-ketosteroid reductase on the steroid nucleus and side chain. Displays the ability to catalyze both oxidation and reduction in vitro, but most probably acts as a reductase in vivo since the oxidase activity measured in vitro is inhibited by physiological concentration of NADPH. Acts preferentially as a 3-alpha-hydroxysteroid dehydrogenase (HSD) with a subsidiary 3-beta-HSD activity. Catalyzes efficiently the transformation of the potent androgen 5-alpha-dihydrotestosterone (5alpha-DHT or 17beta-hydroxy-5alpha-androstan-3-one) into the less active form, 5-alpha-androstan-3-alpha,17-beta-diol (3-alpha-diol). Catalyzes the reduction of estrone into 17beta-estradiol but with low efficiency. Metabolizes a broad spectrum of natural and synthetic therapeutic steroid and plays an important role in metabolism of androgens, estrogens, progestereone and conjugated steroids. Catalyzes the biotransformation of the pesticide chlordecone (kepone) to its corresponding alcohol leading to increased biliary excretion of the pesticide and concomitant reduction of its neurotoxicity since bile is the major excretory route. In Macaca fuscata fuscata (Japanese macaque), this protein is Aldo-keto reductase family 1 member C4 (AKR1C4).